The following is a 164-amino-acid chain: Transcription elongation factor GreA (164 aa).

Residues 50 to 76 (YHAAREEQGQQEARIRQLQELLNNAKV) adopt a coiled-coil conformation.

It belongs to the GreA/GreB family.

Necessary for efficient RNA polymerase transcription elongation past template-encoded arresting sites. The arresting sites in DNA have the property of trapping a certain fraction of elongating RNA polymerases that pass through, resulting in locked ternary complexes. Cleavage of the nascent transcript by cleavage factors such as GreA or GreB allows the resumption of elongation from the new 3'terminus. GreA releases sequences of 2 to 3 nucleotides. This chain is Transcription elongation factor GreA, found in Mycolicibacterium smegmatis (strain ATCC 700084 / mc(2)155) (Mycobacterium smegmatis).